Here is a 797-residue protein sequence, read N- to C-terminus: G-type lectin S-receptor-like serine/threonine-protein kinase SD2-2 (797 aa).

The first 23 residues, 1-23, serve as a signal peptide directing secretion; it reads MPCTTYLPLLLLLFLLPPPSVQS. The Bulb-type lectin domain maps to 24–139; that stretch reads KVIIKGNQTI…DGSPVWQSFD (116 aa). Residues 24 to 401 are Extracellular-facing; that stretch reads KVIIKGNQTI…KNSKGNISKS (378 aa). N-linked (GlcNAc...) asparagine glycans are attached at residues Asn-30, Asn-49, Asn-150, and Asn-197. In terms of domain architecture, EGF-like; atypical spans 274 to 310; that stretch reads PEDPCRVYNLCGQLGFCSSELLKPCACIRGFRPRNDA. 4 disulfide bridges follow: Cys-278–Cys-290, Cys-284–Cys-298, Cys-359–Cys-381, and Cys-363–Cys-369. Positions 321–407 constitute a PAN domain; sequence CRRENGDSGE…ISKSIIILCS (87 aa). 2 N-linked (GlcNAc...) asparagine glycosylation sites follow: Asn-366 and Asn-397. The helical transmembrane segment at 402–422 threads the bilayer; that stretch reads IIILCSVVGSISVLGFTLLVP. Residues 423–797 lie on the Cytoplasmic side of the membrane; sequence LILLKRSRKR…SRSSFGRPSP (375 aa). Residues 461-742 form the Protein kinase domain; sequence NGFSDKVGHG…TVVKMLEGVV (282 aa). Residues 467-475 and Lys-490 each bind ATP; that span reads VGHGGFGAV. The tract at residues 550 to 566 is caM-binding; it reads SPKLLSWETRFRIALGT. Asp-585 (proton acceptor) is an active-site residue. Positions 767–797 are disordered; it reads GTSCSEGHGCSDLNTGLSSPGSRSSFGRPSP. Residues 784–797 are compositionally biased toward low complexity; sequence SSPGSRSSFGRPSP.

Belongs to the protein kinase superfamily. Ser/Thr protein kinase family. In terms of processing, autophosphorylated. Expressed in the shoot apex and roots, specifically in lateral roots and at the root-hypocotyl transition zone.

The protein localises to the cell membrane. It catalyses the reaction L-seryl-[protein] + ATP = O-phospho-L-seryl-[protein] + ADP + H(+). The catalysed reaction is L-threonyl-[protein] + ATP = O-phospho-L-threonyl-[protein] + ADP + H(+). Functionally, serine/threonine-protein kinase. The polypeptide is G-type lectin S-receptor-like serine/threonine-protein kinase SD2-2 (SD22) (Arabidopsis thaliana (Mouse-ear cress)).